Consider the following 176-residue polypeptide: Cytochrome b (176 aa).

3 helical membrane-spanning segments follow: residues Phe-33–Met-53, Trp-77–Ile-98, and Trp-113–Leu-133. Residues His-83 and His-97 each contribute to the heme b site.

The protein belongs to the cytochrome b family. In terms of assembly, the cytochrome bc1 complex contains 11 subunits: 3 respiratory subunits (MT-CYB, CYC1 and UQCRFS1), 2 core proteins (UQCRC1 and UQCRC2) and 6 low-molecular weight proteins (UQCRH/QCR6, UQCRB/QCR7, UQCRQ/QCR8, UQCR10/QCR9, UQCR11/QCR10 and a cleavage product of UQCRFS1). This cytochrome bc1 complex then forms a dimer. It depends on heme b as a cofactor.

It localises to the mitochondrion inner membrane. In terms of biological role, component of the ubiquinol-cytochrome c reductase complex (complex III or cytochrome b-c1 complex) that is part of the mitochondrial respiratory chain. The b-c1 complex mediates electron transfer from ubiquinol to cytochrome c. Contributes to the generation of a proton gradient across the mitochondrial membrane that is then used for ATP synthesis. The polypeptide is Cytochrome b (MT-CYB) (Nyctinomops aurispinosus (Peale's free-tailed bat)).